The sequence spans 339 residues: Adenylosuccinate synthetase (339 aa).

GTP contacts are provided by residues 12–18 and 42–44; these read GDEGKGS and GHS. Residue Asp13 is the Proton acceptor of the active site. Residues Asp13 and Gly42 each contribute to the Mg(2+) site. IMP contacts are provided by residues 13 to 16, 40 to 43, Thr127, Arg141, Gln179, Thr194, and Arg256; these read DEGK and NAGH. His43 functions as the Proton donor in the catalytic mechanism. 252 to 258 serves as a coordination point for substrate; sequence TVTGRRR. Residues Arg258, 284–286, and 324–326 each bind GTP; these read MLD and KTG.

The protein belongs to the adenylosuccinate synthetase family. In terms of assembly, homodimer. It depends on Mg(2+) as a cofactor.

It localises to the cytoplasm. The catalysed reaction is IMP + L-aspartate + GTP = N(6)-(1,2-dicarboxyethyl)-AMP + GDP + phosphate + 2 H(+). It functions in the pathway purine metabolism; AMP biosynthesis via de novo pathway; AMP from IMP: step 1/2. Its function is as follows. Plays an important role in the de novo pathway of purine nucleotide biosynthesis. Catalyzes the first committed step in the biosynthesis of AMP from IMP. The sequence is that of Adenylosuccinate synthetase from Pyrococcus sp. (strain ST700).